Reading from the N-terminus, the 67-residue chain is Small ribosomal subunit protein eS17 (67 aa).

Belongs to the eukaryotic ribosomal protein eS17 family.

The chain is Small ribosomal subunit protein eS17 from Korarchaeum cryptofilum (strain OPF8).